A 441-amino-acid chain; its full sequence is Ribulose bisphosphate carboxylase large chain (441 aa).

Lys5 is subject to N6,N6,N6-trimethyllysine. Residues Asn114 and Thr164 each contribute to the substrate site. Lys166 serves as the catalytic Proton acceptor. Lys168 provides a ligand contact to substrate. Residues Lys192, Asp194, and Glu195 each contribute to the Mg(2+) site. Lys192 carries the post-translational modification N6-carboxylysine. His285 serves as the catalytic Proton acceptor. 3 residues coordinate substrate: Arg286, His318, and Ser370.

The protein belongs to the RuBisCO large chain family. Type I subfamily. As to quaternary structure, heterohexadecamer of 8 large chains and 8 small chains; disulfide-linked. The disulfide link is formed within the large subunit homodimers. Mg(2+) is required as a cofactor. Post-translationally, the disulfide bond which can form in the large chain dimeric partners within the hexadecamer appears to be associated with oxidative stress and protein turnover.

The protein resides in the plastid. The protein localises to the chloroplast. It carries out the reaction 2 (2R)-3-phosphoglycerate + 2 H(+) = D-ribulose 1,5-bisphosphate + CO2 + H2O. The enzyme catalyses D-ribulose 1,5-bisphosphate + O2 = 2-phosphoglycolate + (2R)-3-phosphoglycerate + 2 H(+). Functionally, ruBisCO catalyzes two reactions: the carboxylation of D-ribulose 1,5-bisphosphate, the primary event in carbon dioxide fixation, as well as the oxidative fragmentation of the pentose substrate in the photorespiration process. Both reactions occur simultaneously and in competition at the same active site. This Pellaea rotundifolia (Button fern) protein is Ribulose bisphosphate carboxylase large chain.